Here is a 448-residue protein sequence, read N- to C-terminus: Adenosylhomocysteinase (448 aa).

T61, D136, and E161 together coordinate substrate. 162-164 (TTA) serves as a coordination point for NAD(+). Residues K191 and D195 each contribute to the substrate site. NAD(+) contacts are provided by residues N196, 225-230 (GYGDVG), E248, N283, 304-306 (IGH), and N360.

Belongs to the adenosylhomocysteinase family. NAD(+) serves as cofactor.

It localises to the cytoplasm. It catalyses the reaction S-adenosyl-L-homocysteine + H2O = L-homocysteine + adenosine. Its pathway is amino-acid biosynthesis; L-homocysteine biosynthesis; L-homocysteine from S-adenosyl-L-homocysteine: step 1/1. In terms of biological role, may play a key role in the regulation of the intracellular concentration of adenosylhomocysteine. The chain is Adenosylhomocysteinase from Rhodopirellula baltica (strain DSM 10527 / NCIMB 13988 / SH1).